A 91-amino-acid chain; its full sequence is UPF0223 protein SAB0963 (91 aa).

It belongs to the UPF0223 family.

The sequence is that of UPF0223 protein SAB0963 from Staphylococcus aureus (strain bovine RF122 / ET3-1).